The primary structure comprises 303 residues: tRNA dimethylallyltransferase 1 (303 aa).

17 to 24 (GPTACGKT) contacts ATP. 19–24 (TACGKT) is a binding site for substrate. The tract at residues 42-45 (DSRQ) is interaction with substrate tRNA.

Belongs to the IPP transferase family. As to quaternary structure, monomer. The cofactor is Mg(2+).

It carries out the reaction adenosine(37) in tRNA + dimethylallyl diphosphate = N(6)-dimethylallyladenosine(37) in tRNA + diphosphate. Catalyzes the transfer of a dimethylallyl group onto the adenine at position 37 in tRNAs that read codons beginning with uridine, leading to the formation of N6-(dimethylallyl)adenosine (i(6)A). The sequence is that of tRNA dimethylallyltransferase 1 from Hahella chejuensis (strain KCTC 2396).